The primary structure comprises 485 residues: Fumarate hydratase, mitochondrial (485 aa).

The transit peptide at 1 to 19 (MLSASRKLNNQQFLKTIRN) directs the protein to the mitochondrion. Substrate is bound by residues 118–120 (SGT), 150–153 (HPND), 160–162 (SSN), and Thr208. Catalysis depends on His209, which acts as the Proton donor/acceptor. The active site involves Ser339. Substrate contacts are provided by residues Ser340 and 345–347 (KVN).

Belongs to the class-II fumarase/aspartase family. Fumarase subfamily. Homotetramer.

It localises to the mitochondrion. Its subcellular location is the cytoplasm. The enzyme catalyses (S)-malate = fumarate + H2O. Its pathway is carbohydrate metabolism; tricarboxylic acid cycle; (S)-malate from fumarate: step 1/1. Its function is as follows. Catalyzes the reversible stereospecific interconversion of fumarate to L-malate. Catalyzes the hydration of fumarate to L-malate in the tricarboxylic acid (TCA) cycle to facilitate a transition step in the production of energy in the form of NADH. In Dictyostelium discoideum (Social amoeba), this protein is Fumarate hydratase, mitochondrial.